A 409-amino-acid chain; its full sequence is Tryptophan synthase beta chain (409 aa).

Lysine 95 carries the post-translational modification N6-(pyridoxal phosphate)lysine.

It belongs to the TrpB family. Tetramer of two alpha and two beta chains. Requires pyridoxal 5'-phosphate as cofactor.

It carries out the reaction (1S,2R)-1-C-(indol-3-yl)glycerol 3-phosphate + L-serine = D-glyceraldehyde 3-phosphate + L-tryptophan + H2O. It participates in amino-acid biosynthesis; L-tryptophan biosynthesis; L-tryptophan from chorismate: step 5/5. The beta subunit is responsible for the synthesis of L-tryptophan from indole and L-serine. This is Tryptophan synthase beta chain from Pseudomonas savastanoi pv. phaseolicola (Pseudomonas syringae pv. phaseolicola).